The sequence spans 145 residues: Probable disulfide formation protein (145 aa).

The helical transmembrane segment at 9–28 (ENLLLLIWVQAFLALAGSLF) threads the bilayer. An intrachain disulfide couples cysteine 38 to cysteine 41. Helical transmembrane passes span 43–62 (YQRI…AIKK) and 69–86 (PGLF…YHYL). A disulfide bridge connects residues cysteine 100 and cysteine 106. A helical membrane pass occupies residues 115 to 137 (GFISIPFMAGVAFLIIFVLHLLI).

Belongs to the DsbB family. BdbC subfamily.

The protein localises to the cell membrane. In terms of biological role, required for disulfide bond formation in some proteins. The polypeptide is Probable disulfide formation protein (Oceanobacillus iheyensis (strain DSM 14371 / CIP 107618 / JCM 11309 / KCTC 3954 / HTE831)).